We begin with the raw amino-acid sequence, 239 residues long: uncharacterized protein (239 aa).

One can recognise an S4 RNA-binding domain in the interval 1–65 (MRLDKLLANS…DYREFIYLMM (65 aa)). D103 serves as the catalytic Nucleophile.

The protein belongs to the pseudouridine synthase RsuA family.

It carries out the reaction a uridine in RNA = a pseudouridine in RNA. This is an uncharacterized protein from Bacillus subtilis (strain 168).